The primary structure comprises 245 residues: Flagellar basal-body rod protein FlgF (245 aa).

This sequence belongs to the flagella basal body rod proteins family. In terms of assembly, the basal body constitutes a major portion of the flagellar organelle and consists of five rings (E,L,P,S, and M) mounted on a central rod. The rod consists of about 26 subunits of FlgG in the distal portion, and FlgB, FlgC and FlgF are thought to build up the proximal portion of the rod with about 6 subunits each.

It is found in the bacterial flagellum basal body. The protein is Flagellar basal-body rod protein FlgF (flgF) of Caulobacter vibrioides (strain ATCC 19089 / CIP 103742 / CB 15) (Caulobacter crescentus).